We begin with the raw amino-acid sequence, 298 residues long: Ethanolamine ammonia-lyase small subunit (298 aa).

Residues 17–37 (MGQDVPQPVAPSKQEGAKPQC) are disordered. Residues V210, E231, and C261 each coordinate adenosylcob(III)alamin.

This sequence belongs to the EutC family. In terms of assembly, the basic unit is a heterodimer which dimerizes to form tetramers. The heterotetramers trimerize; 6 large subunits form a core ring with 6 small subunits projecting outwards. It depends on adenosylcob(III)alamin as a cofactor.

It localises to the bacterial microcompartment. The catalysed reaction is ethanolamine = acetaldehyde + NH4(+). The protein operates within amine and polyamine degradation; ethanolamine degradation. Functionally, catalyzes the deamination of various vicinal amino-alcohols to oxo compounds. Allows this organism to utilize ethanolamine as the sole source of nitrogen and carbon in the presence of external vitamin B12. In Salmonella paratyphi A (strain ATCC 9150 / SARB42), this protein is Ethanolamine ammonia-lyase small subunit.